A 460-amino-acid polypeptide reads, in one-letter code: 3-isopropylmalate dehydratase large subunit (460 aa).

[4Fe-4S] cluster contacts are provided by Cys341, Cys401, and Cys404.

The protein belongs to the aconitase/IPM isomerase family. LeuC type 1 subfamily. As to quaternary structure, heterodimer of LeuC and LeuD. Requires [4Fe-4S] cluster as cofactor.

The catalysed reaction is (2R,3S)-3-isopropylmalate = (2S)-2-isopropylmalate. It functions in the pathway amino-acid biosynthesis; L-leucine biosynthesis; L-leucine from 3-methyl-2-oxobutanoate: step 2/4. Catalyzes the isomerization between 2-isopropylmalate and 3-isopropylmalate, via the formation of 2-isopropylmaleate. In Phocaeicola vulgatus (strain ATCC 8482 / DSM 1447 / JCM 5826 / CCUG 4940 / NBRC 14291 / NCTC 11154) (Bacteroides vulgatus), this protein is 3-isopropylmalate dehydratase large subunit.